The chain runs to 511 residues: Maturase K (511 aa).

Belongs to the intron maturase 2 family. MatK subfamily.

The protein resides in the plastid. It is found in the chloroplast. Usually encoded in the trnK tRNA gene intron. Probably assists in splicing its own and other chloroplast group II introns. This is Maturase K from Oryza nivara (Indian wild rice).